Consider the following 292-residue polypeptide: ATP synthase subunit a (292 aa).

7 helical membrane passes run 39 to 59 (QILG…FYKL), 73 to 93 (FLLL…DLLG), 102 to 122 (YFLM…LGGI), 128 to 148 (SLTF…VMGI), 172 to 192 (TFIP…SISL), 196 to 216 (GNIL…IFIF), and 231 to 251 (VFAG…AGVL).

It belongs to the ATPase A chain family. In terms of assembly, F-type ATPases have 2 components, CF(1) - the catalytic core - and CF(0) - the membrane proton channel. CF(1) has five subunits: alpha(3), beta(3), gamma(1), delta(1), epsilon(1). CF(0) has three main subunits: a(1), b(2) and c(9-12). The alpha and beta chains form an alternating ring which encloses part of the gamma chain. CF(1) is attached to CF(0) by a central stalk formed by the gamma and epsilon chains, while a peripheral stalk is formed by the delta and b chains.

Its subcellular location is the cell membrane. Its function is as follows. Key component of the proton channel; it plays a direct role in the translocation of protons across the membrane. The chain is ATP synthase subunit a from Mycoplasma genitalium (strain ATCC 33530 / DSM 19775 / NCTC 10195 / G37) (Mycoplasmoides genitalium).